A 72-amino-acid chain; its full sequence is Cell division protein ZapB (72 aa).

Residues 3–71 (LSIIDQLEEK…LRSLLGQIDN (69 aa)) are a coiled coil.

Belongs to the ZapB family. In terms of assembly, homodimer. The ends of the coiled-coil dimer bind to each other, forming polymers. Interacts with FtsZ.

The protein localises to the cytoplasm. Its function is as follows. Non-essential, abundant cell division factor that is required for proper Z-ring formation. It is recruited early to the divisome by direct interaction with FtsZ, stimulating Z-ring assembly and thereby promoting cell division earlier in the cell cycle. Its recruitment to the Z-ring requires functional FtsA or ZipA. This chain is Cell division protein ZapB, found in Haemophilus ducreyi (strain 35000HP / ATCC 700724).